The primary structure comprises 221 residues: MGRRPARCYRQIKGKPYPKSRYCRGVPDPKIRIYDVGMKRKGVDEFPYCVHLVSWEKENVSSEALEAARIACNKYMVKSAGKDAFHLRIRVHPFHVLRINKMLSCAGADRLQTGMRGAFGKALGTCARVAIGQVLLSVRCKDAHGHHAQEALRRAKFKFPGRQKIIVSRKWGFTKFNRADYTKLRQEKRIVPDGVNAKFLSCHGPLANRQPGSAFLSAGAQ.

It belongs to the universal ribosomal protein uL16 family. Component of the small ribosomal subunit. Mature ribosomes consist of a small (40S) and a large (60S) subunit. The 40S subunit contains about 33 different proteins and 1 molecule of RNA (18S). The 60S subunit contains about 49 different proteins and 3 molecules of RNA (25S, 5.8S and 5S).

The chain is Large ribosomal subunit protein uL16y (RPL10B) from Arabidopsis thaliana (Mouse-ear cress).